The following is a 181-amino-acid chain: UPF0398 protein lmo1889 (181 aa).

It belongs to the UPF0398 family.

In Listeria monocytogenes serovar 1/2a (strain ATCC BAA-679 / EGD-e), this protein is UPF0398 protein lmo1889.